A 239-amino-acid chain; its full sequence is UDP-2,3-diacylglucosamine hydrolase (239 aa).

Mn(2+) is bound by residues aspartate 8, histidine 10, aspartate 41, asparagine 78, and histidine 113. A substrate-binding site is contributed by 78-79 (NR). Substrate-binding residues include aspartate 121, serine 159, asparagine 163, lysine 166, and histidine 194. Residues histidine 194 and histidine 196 each coordinate Mn(2+).

The protein belongs to the LpxH family. Mn(2+) is required as a cofactor.

The protein localises to the cell inner membrane. It catalyses the reaction UDP-2-N,3-O-bis[(3R)-3-hydroxytetradecanoyl]-alpha-D-glucosamine + H2O = 2-N,3-O-bis[(3R)-3-hydroxytetradecanoyl]-alpha-D-glucosaminyl 1-phosphate + UMP + 2 H(+). It participates in glycolipid biosynthesis; lipid IV(A) biosynthesis; lipid IV(A) from (3R)-3-hydroxytetradecanoyl-[acyl-carrier-protein] and UDP-N-acetyl-alpha-D-glucosamine: step 4/6. Its function is as follows. Hydrolyzes the pyrophosphate bond of UDP-2,3-diacylglucosamine to yield 2,3-diacylglucosamine 1-phosphate (lipid X) and UMP by catalyzing the attack of water at the alpha-P atom. Involved in the biosynthesis of lipid A, a phosphorylated glycolipid that anchors the lipopolysaccharide to the outer membrane of the cell. This is UDP-2,3-diacylglucosamine hydrolase from Shewanella sp. (strain ANA-3).